Here is a 146-residue protein sequence, read N- to C-terminus: Hemoglobin subunit beta (146 aa).

In terms of domain architecture, Globin spans 2–146; it reads HWSAEEKQLI…VAHALARKYH (145 aa). His-63 and His-92 together coordinate heme b.

The protein belongs to the globin family. As to quaternary structure, heterotetramer of two alpha chains and two beta chains. As to expression, red blood cells.

In terms of biological role, involved in oxygen transport from the lung to the various peripheral tissues. This is Hemoglobin subunit beta (HBB) from Columba livia (Rock dove).